Reading from the N-terminus, the 179-residue chain is Protein PLASTID REDOX INSENSITIVE 2, chloroplastic (179 aa).

A chloroplast-targeting transit peptide spans 1-69 (MASMHEALFS…SLSRRGFVCR (69 aa)).

Binds DNA when in complex with CSP41b.

The protein resides in the plastid. It localises to the chloroplast stroma. Its subcellular location is the chloroplast nucleoid. Functionally, involved in redox-mediated retrograde signaling to synchronize the expression of photosynthetic genes from both the nuclear and plastidic genomes, especially in excess light conditions. Required for full expression of genes transcribed by the plastid-encoded RNA polymerase (PEP). Essential for embryo development. The polypeptide is Protein PLASTID REDOX INSENSITIVE 2, chloroplastic (Arabidopsis thaliana (Mouse-ear cress)).